The chain runs to 205 residues: Spermatogenesis-associated protein 24 (205 aa).

Residues 17-166 adopt a coiled-coil conformation; it reads LALDQLRDVI…QQKQIFRNHM (150 aa). Positions 138-185 are required for interaction with CBX5 and TBPL1; that stretch reads EDILNGKENEIKELQQVISQQKQIFRNHMSDFRIQKQQESYMAQVLDQ. A disordered region spans residues 180–205; the sequence is AQVLDQKHKKASGTRQARSHQHPREK. Residues 186 to 205 show a composition bias toward basic residues; that stretch reads KHKKASGTRQARSHQHPREK.

It belongs to the SPATA24 family. Homodimer. Interacts with CBX3, CBX5, GMNN, GTF2B, TBPL1 and the polycomb proteins PHCF2, RNF2 and SCMH1 but not with CBX1 or PCGF2.

Its subcellular location is the cytoplasm. The protein resides in the nucleus. The protein localises to the nucleolus. It is found in the nucleoplasm. Its function is as follows. Binds DNA with high affinity but does not bind to TATA boxes. Synergises with GMNN and TBP in activation of TATA box-containing promoters and with GMNN and TBPL1 in activation of the NF1 TATA-less promoter. May play a role in cytoplasm movement and removal during spermiogenesis. In Homo sapiens (Human), this protein is Spermatogenesis-associated protein 24 (SPATA24).